Reading from the N-terminus, the 505-residue chain is Flagellin (505 aa).

Belongs to the bacterial flagellin family.

The protein localises to the secreted. It localises to the bacterial flagellum. Its function is as follows. Flagellin is the subunit protein which polymerizes to form the filaments of bacterial flagella. The polypeptide is Flagellin (fliC) (Salmonella muenchen).